A 331-amino-acid polypeptide reads, in one-letter code: Ferrochelatase (331 aa).

His187 and Glu286 together coordinate Fe cation.

This sequence belongs to the ferrochelatase family.

It localises to the cytoplasm. The catalysed reaction is heme b + 2 H(+) = protoporphyrin IX + Fe(2+). It participates in porphyrin-containing compound metabolism; protoheme biosynthesis; protoheme from protoporphyrin-IX: step 1/1. Functionally, catalyzes the ferrous insertion into protoporphyrin IX. This Legionella pneumophila (strain Lens) protein is Ferrochelatase.